The sequence spans 499 residues: Chitinase B (499 aa).

The N-terminal stretch at 1–41 is a signal peptide; it reads MSTRKAVIGYYFIPTNQINNYTETDTSVVPFPVSNITPAKA. The region spanning 42-425 is the GH18 domain; that stretch reads KQLTHINFSF…AALDRYFNAA (384 aa). Chitin-binding positions include 68-69 and 95-98; these read DA and GGWY. Residue Glu144 is the Proton donor of the active site. Chitin-binding positions include Tyr145, 212–215, and Trp403; that span reads MTYD. The Chitin-binding type-3 domain maps to 438–498; the sequence is LRYTGVGPGN…DSAWLKVGRL (61 aa).

It belongs to the glycosyl hydrolase 18 family. Chitinase class II subfamily.

It catalyses the reaction Random endo-hydrolysis of N-acetyl-beta-D-glucosaminide (1-&gt;4)-beta-linkages in chitin and chitodextrins.. In Serratia marcescens, this protein is Chitinase B (chiB).